The primary structure comprises 155 residues: Small ribosomal subunit protein uS7 (155 aa).

This sequence belongs to the universal ribosomal protein uS7 family. In terms of assembly, part of the 30S ribosomal subunit. Contacts proteins S9 and S11.

In terms of biological role, one of the primary rRNA binding proteins, it binds directly to 16S rRNA where it nucleates assembly of the head domain of the 30S subunit. Is located at the subunit interface close to the decoding center, probably blocks exit of the E-site tRNA. The polypeptide is Small ribosomal subunit protein uS7 (Thermosipho africanus (strain TCF52B)).